A 30-amino-acid polypeptide reads, in one-letter code: Phospholemman-like protein (30 aa).

It belongs to the FXYD family. Phosphorylated by protein kinase a (PK-A) and protein kinase C (PK-C). Phosphorylated in response to insulin and adrenergic stimulation.

The protein localises to the microsome membrane. The protein resides in the endoplasmic reticulum membrane. Its function is as follows. Induces a hyperpolarization-activated chloride current when expressed in Xenopus oocytes. May have a functional role in muscle contraction. The sequence is that of Phospholemman-like protein from Squalus acanthias (Spiny dogfish).